A 517-amino-acid polypeptide reads, in one-letter code: Acyltransferase AFT15-1 (517 aa).

Histidine 180 acts as the Proton acceptor in catalysis.

This sequence belongs to the plant acyltransferase family.

It participates in mycotoxin biosynthesis. In terms of biological role, acyltransferase; part of the gene clusters that mediate the biosynthesis of the host-selective toxins (HSTs) AF-toxins responsible for Alternaria black spot of strawberry disease by the strawberry pathotype. AF-toxin I and III are valine derivatives of 2,3-dyhydroxy-isovaleric acid and 2-hydroxy-isovaleric acid respectively, while AF II is an isoleucine derivative of 2-hydroxy-valeric acid. These derivatives are bound to a 9,10-epoxy-8-hydroxy-9-methyl-decatrienoic acid (EDA) moiety. On cellular level, AF-toxins affect plasma membrane of susceptible cells and cause a sudden increase in loss of K(+) after a few minutes of toxin treatment. The aldo-keto reductase AFTS1 catalyzes the conversion of 2-keto-isovaleric acid (2-KIV) to 2-hydroxy-isovaleric acid (2-HIV) by reduction of its ketone to an alcohol. The acyl-CoA ligase AFT1, the hydrolase AFT2 and the enoyl-CoA hydratases AFT3 and AFT6, but also the polyketide synthase AFT9, the acyl-CoA dehydrogenase AFT10, the cytochrome P450 monooxygenase AFT11 and the oxidoreductase AFT12 are all involved in the biosynthesis of the AK-, AF- and ACT-toxin common EDA structural moiety. The exact function of each enzyme, and of additional enzymes identified within the AF-toxin clusters have still to be determined. The chain is Acyltransferase AFT15-1 (AFT15-1) from Alternaria alternata (Alternaria rot fungus).